The chain runs to 400 residues: S-adenosylmethionine synthase (400 aa).

Position 136 to 141 (136 to 141) interacts with ATP; it reads GQGSVD.

It belongs to the AdoMet synthase 2 family. The cofactor is Mg(2+).

The catalysed reaction is L-methionine + ATP + H2O = S-adenosyl-L-methionine + phosphate + diphosphate. It participates in amino-acid biosynthesis; S-adenosyl-L-methionine biosynthesis; S-adenosyl-L-methionine from L-methionine: step 1/1. Functionally, catalyzes the formation of S-adenosylmethionine from methionine and ATP. In Thermoplasma acidophilum (strain ATCC 25905 / DSM 1728 / JCM 9062 / NBRC 15155 / AMRC-C165), this protein is S-adenosylmethionine synthase (mat).